A 407-amino-acid chain; its full sequence is Probable tRNA sulfurtransferase (407 aa).

Residues 61–165 form the THUMP domain; sequence NEITYRLSKI…LDAIYMYEEV (105 aa). Residues 183-184, 208-209, Arg-265, Gly-287, and Gln-296 each bind ATP; these read ML and HF.

This sequence belongs to the ThiI family.

Its subcellular location is the cytoplasm. It carries out the reaction [ThiI sulfur-carrier protein]-S-sulfanyl-L-cysteine + a uridine in tRNA + 2 reduced [2Fe-2S]-[ferredoxin] + ATP + H(+) = [ThiI sulfur-carrier protein]-L-cysteine + a 4-thiouridine in tRNA + 2 oxidized [2Fe-2S]-[ferredoxin] + AMP + diphosphate. The catalysed reaction is [ThiS sulfur-carrier protein]-C-terminal Gly-Gly-AMP + S-sulfanyl-L-cysteinyl-[cysteine desulfurase] + AH2 = [ThiS sulfur-carrier protein]-C-terminal-Gly-aminoethanethioate + L-cysteinyl-[cysteine desulfurase] + A + AMP + 2 H(+). The protein operates within cofactor biosynthesis; thiamine diphosphate biosynthesis. Catalyzes the ATP-dependent transfer of a sulfur to tRNA to produce 4-thiouridine in position 8 of tRNAs, which functions as a near-UV photosensor. Also catalyzes the transfer of sulfur to the sulfur carrier protein ThiS, forming ThiS-thiocarboxylate. This is a step in the synthesis of thiazole, in the thiamine biosynthesis pathway. The sulfur is donated as persulfide by IscS. This Staphylococcus aureus (strain bovine RF122 / ET3-1) protein is Probable tRNA sulfurtransferase.